A 665-amino-acid chain; its full sequence is Pre-mRNA-processing factor 39 (665 aa).

The span at Met-1–Asn-11 shows a compositional bias: basic and acidic residues. A disordered region spans residues Met-1–His-28. Polar residues predominate over residues Ser-12–Glu-22. Residue Ser-44 is modified to Phosphoserine. 7 HAT repeats span residues Asn-107–Arg-139, Asp-141–Glu-173, Glu-181–Glu-216, Gly-218–Asn-251, Phe-331–Glu-363, Gly-365–Asn-397, and Gly-402–Asn-434. The span at Gln-599 to Asp-622 shows a compositional bias: basic and acidic residues. Residues Gln-599–Ser-625 are disordered.

This sequence belongs to the PRP39 family.

The protein localises to the nucleus. Its function is as follows. Involved in pre-mRNA splicing. The sequence is that of Pre-mRNA-processing factor 39 (Prpf39) from Mus musculus (Mouse).